Consider the following 217-residue polypeptide: Probable GTP-binding protein EngB (217 aa).

Residues 33–217 enclose the EngB-type G domain; it reads GPTEIAFAGR…RAAIELAVTR (185 aa). Residues 41–48, 68–72, 95–98, 162–165, and 196–198 contribute to the GTP site; these read GRSNVGKS, GRTQE, DMPG, TKTD, and TSS. Mg(2+) is bound by residues serine 48 and threonine 70.

The protein belongs to the TRAFAC class TrmE-Era-EngA-EngB-Septin-like GTPase superfamily. EngB GTPase family. Mg(2+) is required as a cofactor.

Its function is as follows. Necessary for normal cell division and for the maintenance of normal septation. The chain is Probable GTP-binding protein EngB from Rhizobium meliloti (strain 1021) (Ensifer meliloti).